Here is a 171-residue protein sequence, read N- to C-terminus: Adenine phosphoribosyltransferase (171 aa).

Belongs to the purine/pyrimidine phosphoribosyltransferase family. Homodimer.

It is found in the cytoplasm. It catalyses the reaction AMP + diphosphate = 5-phospho-alpha-D-ribose 1-diphosphate + adenine. It participates in purine metabolism; AMP biosynthesis via salvage pathway; AMP from adenine: step 1/1. Its function is as follows. Catalyzes a salvage reaction resulting in the formation of AMP, that is energically less costly than de novo synthesis. This is Adenine phosphoribosyltransferase from Syntrophotalea carbinolica (strain DSM 2380 / NBRC 103641 / GraBd1) (Pelobacter carbinolicus).